A 162-amino-acid polypeptide reads, in one-letter code: Ribosomal RNA large subunit methyltransferase H (162 aa).

Residues leucine 78, glycine 109, and leucine 128–leucine 133 each bind S-adenosyl-L-methionine.

The protein belongs to the RNA methyltransferase RlmH family. As to quaternary structure, homodimer.

It is found in the cytoplasm. It carries out the reaction pseudouridine(1915) in 23S rRNA + S-adenosyl-L-methionine = N(3)-methylpseudouridine(1915) in 23S rRNA + S-adenosyl-L-homocysteine + H(+). Functionally, specifically methylates the pseudouridine at position 1915 (m3Psi1915) in 23S rRNA. This Psychrobacter sp. (strain PRwf-1) protein is Ribosomal RNA large subunit methyltransferase H.